A 1415-amino-acid chain; its full sequence is DNA-directed RNA polymerase subunit beta'' (1415 aa).

Zn(2+) contacts are provided by Cys-217, Cys-291, Cys-298, and Cys-301.

This sequence belongs to the RNA polymerase beta' chain family. RpoC2 subfamily. In terms of assembly, in plastids the minimal PEP RNA polymerase catalytic core is composed of four subunits: alpha, beta, beta', and beta''. When a (nuclear-encoded) sigma factor is associated with the core the holoenzyme is formed, which can initiate transcription. Requires Zn(2+) as cofactor.

Its subcellular location is the plastid. The protein resides in the chloroplast. It catalyses the reaction RNA(n) + a ribonucleoside 5'-triphosphate = RNA(n+1) + diphosphate. DNA-dependent RNA polymerase catalyzes the transcription of DNA into RNA using the four ribonucleoside triphosphates as substrates. The sequence is that of DNA-directed RNA polymerase subunit beta'' from Phaeodactylum tricornutum (strain CCAP 1055/1).